Reading from the N-terminus, the 395-residue chain is Protein NDRG1 (395 aa).

Positions 325–395 (RSRTGSAASS…NTPKSMEISC (71 aa)) are disordered. A compositionally biased stretch (low complexity) spans 326–339 (SRTGSAASSSSQDG). 4 repeat units span residues 339 to 348 (GNRSRSHTNE), 349 to 358 (GSRSRSHTGD), 359 to 368 (GNRSRAHTGD), and 369 to 378 (GNRSRSHTDS). The interval 339–378 (GNRSRSHTNEGSRSRSHTGDGNRSRAHTGDGNRSRSHTDS) is 4 X 10 AA tandem repeats of G-[NS]-R-S-R-[AS]-H-T-[DGN]-[DES]. Residues 345 to 376 (HTNEGSRSRSHTGDGNRSRAHTGDGNRSRSHT) are compositionally biased toward basic and acidic residues. Over residues 377–389 (DSNNTNSEHNTPK) the composition is skewed to polar residues.

This sequence belongs to the NDRG family.

In terms of biological role, may be involved in pronephros development, after specification of the pronephros. The protein is Protein NDRG1 of Xenopus tropicalis (Western clawed frog).